The following is an 88-amino-acid chain: Protein K3 (88 aa).

The S1 motif domain occupies 8–82 (LPNAGDVIKG…TKGYIDVNYK (75 aa)). 2 binding to host EIF2AK2/PKR regions span residues 43-53 (SVKMHMDRYVE) and 74-79 (KGYIDV).

The protein belongs to the orthopoxvirus OPG041 family. Interacts with host EIF2AK2/PKR kinase.

Functionally, viral mimic of eIF-2-alpha that acts as a pseudosubstrate for EIF2AK2/PKR kinase. Inhibits therefore eIF-2-alpha phosphorylation by host EIF2AK2/PKR kinase and prevents protein synthesis shutoff. Determinant of host species specificity. The polypeptide is Protein K3 (OPG041) (Homo sapiens (Human)).